The sequence spans 473 residues: Cysteine--tRNA ligase (473 aa).

C28 provides a ligand contact to Zn(2+). Positions 30–40 (VTVYDLCHLGH) match the 'HIGH' region motif. 3 residues coordinate Zn(2+): C213, H238, and E242. A 'KMSKS' region motif is present at residues 270-274 (KMSKS). K273 is a binding site for ATP.

This sequence belongs to the class-I aminoacyl-tRNA synthetase family. As to quaternary structure, monomer. Requires Zn(2+) as cofactor.

The protein resides in the cytoplasm. The enzyme catalyses tRNA(Cys) + L-cysteine + ATP = L-cysteinyl-tRNA(Cys) + AMP + diphosphate. The chain is Cysteine--tRNA ligase from Blochmanniella pennsylvanica (strain BPEN).